An 899-amino-acid polypeptide reads, in one-letter code: 1,4-alpha-glucan-branching enzyme 3, chloroplastic/amyloplastic (899 aa).

The N-terminal 49 residues, 1–49, are a transit peptide targeting the chloroplast; that stretch reads MVSLSNQTRFSFHPNNLVVSEKRRLGISGVNFPRKIKLKITCFAAERPR. A disordered region spans residues 47 to 67; it reads RPRQEKQKKKSQSQSTSDAEA. The active-site Proton donor is Glu612.

Belongs to the glycosyl hydrolase 13 family. GlgB subfamily. As to quaternary structure, monomer. Mostly expressed in flowers and inflorescence, and, to a lower extent, in seedlings, roots, stems, leaves, siliques and seeds.

Its subcellular location is the plastid. The protein localises to the chloroplast stroma. The protein resides in the amyloplast. The enzyme catalyses Transfers a segment of a (1-&gt;4)-alpha-D-glucan chain to a primary hydroxy group in a similar glucan chain.. Its pathway is glycan biosynthesis; starch biosynthesis. Functionally, catalyzes the formation of the alpha-1,6-glucosidic linkages in starch by scission of a 1,4-alpha-linked oligosaccharide from growing alpha-1,4-glucan chains and the subsequent attachment of the oligosaccharide to the alpha-1,6 position. Essential during embryogenesis. The protein is 1,4-alpha-glucan-branching enzyme 3, chloroplastic/amyloplastic (SBE3) of Arabidopsis thaliana (Mouse-ear cress).